A 294-amino-acid polypeptide reads, in one-letter code: Non-selective voltage-gated ion channel VDAC2 (294 aa).

A2 is modified (N-acetylalanine). ATP-binding residues include K23 and K31. N6-acetyllysine; alternate is present on K31. At K31 the chain carries N6-succinyllysine; alternate. A Glycyl lysine isopeptide (Lys-Gly) (interchain with G-Cter in ubiquitin); alternate cross-link involves residue K31. A run of 2 beta stranded transmembrane segments spans residues 37 to 46 and 50 to 58; these read LVKLDVKTKS and VEFSTSGSS. Residues K64 and K72 each participate in a glycyl lysine isopeptide (Lys-Gly) (interchain with G-Cter in ubiquitin) cross-link. The beta stranded transmembrane segment at 65-75 threads the bilayer; that stretch reads VTGTLETKYKW. Position 78 is a phosphotyrosine (Y78). 3 beta stranded membrane-spanning segments follow: residues 80 to 87, 91 to 100, and 106 to 115; these read LTFTEKWN, TLGTEIAIED, and LKLTFDTTFS. T118 is subject to Phosphothreonine. K120 is modified (N6-acetyllysine; alternate). K120 participates in a covalent cross-link: Glycyl lysine isopeptide (Lys-Gly) (interchain with G-Cter in ubiquitin); alternate. Residues K121 and K124 each participate in a glycyl lysine isopeptide (Lys-Gly) (interchain with G-Cter in ubiquitin) cross-link. The next 4 membrane-spanning stretches (beta stranded) occupy residues 122 to 131, 134 to 141, 148 to 156, and 161 to 169; these read SGKIKSSYKR, INLGCDVD, AIHGSAVFG, and LAGYQMTFD. Residue K172 forms a Glycyl lysine isopeptide (Lys-Gly) (interchain with G-Cter in ubiquitin) linkage. A run of 6 beta stranded transmembrane segments spans residues 174–186, 189–196, 200–209, 213–222, 229–238, and 242–249; these read KLTR…GYRT, FQLHTNVN, EFGGSIYQKV, LDTSVNLAWT, RFGIAAKYQL, and ASISAKVN. Position 251 is a phosphoserine (S251). NAD(+)-binding positions include 253 to 255 and 271 to 275; these read LIG and SALVD. 2 beta stranded membrane passes run 253–262 and 265–274; these read LIGVGYTQTL and GVKLTLSALV. The residue at position 277 (K277) is an N6-acetyllysine; alternate. A Glycyl lysine isopeptide (Lys-Gly) (interchain with G-Cter in ubiquitin); alternate cross-link involves residue K277. Residues 284–293 traverse the membrane as a beta stranded segment; the sequence is HKVGLALELE. K285 is covalently cross-linked (Glycyl lysine isopeptide (Lys-Gly) (interchain with G-Cter in ubiquitin)).

The protein belongs to the eukaryotic mitochondrial porin family. Monomer, homodimer and higher order oligomers; formation of higher order structures is necessary for scramblase activity. Interacts with ARMC12 in a TBC1D21-dependent manner. Interacts with KLC3. Interacts with SPATA33. Interacts with PPP3CC in a SPATA33-dependent manner. In terms of processing, ubiquitinated by PRKN during mitophagy, leading to its degradation and enhancement of mitophagy. Deubiquitinated by USP30. As to expression, expressed in erythrocytes (at protein level). Expressed in all tissues examined.

Its subcellular location is the mitochondrion outer membrane. The protein localises to the membrane. The catalysed reaction is chloride(in) = chloride(out). It catalyses the reaction K(+)(in) = K(+)(out). It carries out the reaction a 1,2-diacyl-sn-glycero-3-phospho-L-serine(in) = a 1,2-diacyl-sn-glycero-3-phospho-L-serine(out). The enzyme catalyses a 1,2-diacyl-sn-glycero-3-phosphocholine(in) = a 1,2-diacyl-sn-glycero-3-phosphocholine(out). The catalysed reaction is a 1,2-diacyl-sn-glycero-3-phospho-(1D-myo-inositol)(in) = a 1,2-diacyl-sn-glycero-3-phospho-(1D-myo-inositol)(out). Non-selective voltage-gated ion channel that mediates the transport of anions and cations through the mitochondrion outer membrane and plasma membrane. The channel adopts an open conformation at zero mV and a closed conformation at both positive and negative potentials. There are two populations of channels; the main that functions in a lower open-state conductance with lower ion selectivity, that switch, in a voltage-dependent manner, from the open to a low-conducting 'closed' state and the other that has a normal ion selectivity in the typical high conductance, 'open' state. Binds various lipids, including the sphingolipid ceramide, the phospholipid phosphatidylcholine, and the sterols cholesterol and oxysterol. Binding of ceramide promotes the mitochondrial outer membrane permeabilization (MOMP) apoptotic pathway. In terms of biological role, catalyzes the scrambling of phospholipids across the outer mitochondrial membrane; the mechanism is unrelated to channel activity and is capable of translocating both anionic and zwitterionic phospholipids. In Homo sapiens (Human), this protein is Non-selective voltage-gated ion channel VDAC2.